We begin with the raw amino-acid sequence, 305 residues long: DNA-directed RNA polymerase 35 kDa subunit (305 aa).

This sequence belongs to the poxviridae DNA-directed RNA polymerase 35 kDa subunit family. In terms of assembly, the DNA-dependent RNA polymerase used for intermediate and late genes expression consists of eight subunits 147 kDa, 133 kDa, 35 kDa, 30 kDa, 22 kDa, 19 kDa, 18 kDa and 7 kDa totalling more than 500 kDa in mass. The same holoenzyme, with the addition of the transcription-specificity factor RAP94, is used for early gene expression.

It is found in the virion. The catalysed reaction is RNA(n) + a ribonucleoside 5'-triphosphate = RNA(n+1) + diphosphate. Part of the DNA-dependent RNA polymerase which catalyzes the transcription of viral DNA into RNA using the four ribonucleoside triphosphates as substrates. Responsible for the transcription of early, intermediate and late genes. DNA-dependent RNA polymerase associates with the early transcription factor (ETF) thereby allowing the early genes transcription. Late transcription, and probably also intermediate transcription, require newly synthesized RNA polymerase. The protein is DNA-directed RNA polymerase 35 kDa subunit (RPO35) of Rabbitpox virus (strain Utrecht) (RPV).